The chain runs to 323 residues: Sphingolipid delta(4)-desaturase DES1 (323 aa).

Gly2 carries N-myristoyl glycine lipidation. A run of 2 helical transmembrane segments spans residues 41-61 (HNLI…FYLV) and 68-88 (WVIF…TLAI). Residues 89–93 (HEISH) carry the Histidine box-1 motif. Residues 104–124 (WNRWFGMFANLSLGVPYSISF) traverse the membrane as a helical segment. The Histidine box-2 motif lies at 128-132 (HMDHH). The next 3 helical transmembrane spans lie at 152–172 (FFCT…FYAF), 184–204 (YLEI…YYVF), and 209–229 (LVYM…SGHF). The Histidine box-3 motif lies at 259-263 (HNEHH). Ser307 is subject to Phosphoserine.

It belongs to the fatty acid desaturase type 1 family. DEGS subfamily. As to quaternary structure, interacts with RLBP1; the interaction increases synthesis of chromophore-precursors by DEGS1. In terms of processing, myristoylation can target the enzyme to the mitochondria leading to an increase in ceramide levels. As to expression, detected in testis. Detected in pachytene spermatocytes and round spermatids. Expressed in retina and retinal pigment epithelium by Mueller cells (at protein level).

The protein resides in the mitochondrion membrane. Its subcellular location is the endoplasmic reticulum membrane. It carries out the reaction an N-acylsphinganine + 2 Fe(II)-[cytochrome b5] + O2 + 2 H(+) = an N-acylsphing-4-enine + 2 Fe(III)-[cytochrome b5] + 2 H2O. It catalyses the reaction all-trans-retinol = 11-cis-retinol. The catalysed reaction is all-trans-retinol = 9-cis-retinol. The enzyme catalyses all-trans-retinol = 13-cis-retinol. It carries out the reaction 11-cis-retinol = 13-cis-retinol. It catalyses the reaction 11-cis-retinol = 9-cis-retinol. Has sphingolipid-delta-4-desaturase activity. Converts D-erythro-sphinganine to D-erythro-sphingosine (E-sphing-4-enine). Catalyzes the equilibrium isomerization of retinols. This Mus musculus (Mouse) protein is Sphingolipid delta(4)-desaturase DES1.